We begin with the raw amino-acid sequence, 344 residues long: Succinylglutamate desuccinylase (344 aa).

3 residues coordinate Zn(2+): histidine 63, glutamate 66, and histidine 160. Residue glutamate 224 is part of the active site.

This sequence belongs to the AspA/AstE family. Succinylglutamate desuccinylase subfamily. Zn(2+) is required as a cofactor.

The enzyme catalyses N-succinyl-L-glutamate + H2O = L-glutamate + succinate. The protein operates within amino-acid degradation; L-arginine degradation via AST pathway; L-glutamate and succinate from L-arginine: step 5/5. In terms of biological role, transforms N(2)-succinylglutamate into succinate and glutamate. This Shewanella sp. (strain W3-18-1) protein is Succinylglutamate desuccinylase.